Here is a 173-residue protein sequence, read N- to C-terminus: DRBM domain-containing protein 340R (173 aa).

Residues 30-102 form the DRBM domain; sequence NSIGFLNEFC…AFKTIKELNL (73 aa).

The chain is DRBM domain-containing protein 340R from Invertebrate iridescent virus 6 (IIV-6).